The primary structure comprises 547 residues: Chaperonin GroEL (547 aa).

Residues 30–33 (TLGP), Lys51, 87–91 (DGTTT), Gly415, 479–481 (NAA), and Asp495 contribute to the ATP site. Residues 525–547 (PKEDSPGAGAGMGGMGGMGGMDM) form a disordered region. Gly residues predominate over residues 532–547 (AGAGMGGMGGMGGMDM).

The protein belongs to the chaperonin (HSP60) family. Forms a cylinder of 14 subunits composed of two heptameric rings stacked back-to-back. Interacts with the co-chaperonin GroES.

The protein resides in the cytoplasm. The enzyme catalyses ATP + H2O + a folded polypeptide = ADP + phosphate + an unfolded polypeptide.. Functionally, together with its co-chaperonin GroES, plays an essential role in assisting protein folding. The GroEL-GroES system forms a nano-cage that allows encapsulation of the non-native substrate proteins and provides a physical environment optimized to promote and accelerate protein folding. This Nitrosomonas europaea (strain ATCC 19718 / CIP 103999 / KCTC 2705 / NBRC 14298) protein is Chaperonin GroEL.